Consider the following 363-residue polypeptide: Phosphoserine aminotransferase (363 aa).

An L-glutamate-binding site is contributed by arginine 42. Residues 76 to 77 (GR), tryptophan 102, threonine 156, aspartate 175, and glutamine 198 contribute to the pyridoxal 5'-phosphate site. At lysine 199 the chain carries N6-(pyridoxal phosphate)lysine. A pyridoxal 5'-phosphate-binding site is contributed by 240–241 (NT).

It belongs to the class-V pyridoxal-phosphate-dependent aminotransferase family. SerC subfamily. Homodimer. It depends on pyridoxal 5'-phosphate as a cofactor.

Its subcellular location is the cytoplasm. It carries out the reaction O-phospho-L-serine + 2-oxoglutarate = 3-phosphooxypyruvate + L-glutamate. It catalyses the reaction 4-(phosphooxy)-L-threonine + 2-oxoglutarate = (R)-3-hydroxy-2-oxo-4-phosphooxybutanoate + L-glutamate. The protein operates within amino-acid biosynthesis; L-serine biosynthesis; L-serine from 3-phospho-D-glycerate: step 2/3. It participates in cofactor biosynthesis; pyridoxine 5'-phosphate biosynthesis; pyridoxine 5'-phosphate from D-erythrose 4-phosphate: step 3/5. Functionally, catalyzes the reversible conversion of 3-phosphohydroxypyruvate to phosphoserine and of 3-hydroxy-2-oxo-4-phosphonooxybutanoate to phosphohydroxythreonine. The protein is Phosphoserine aminotransferase of Shewanella denitrificans (strain OS217 / ATCC BAA-1090 / DSM 15013).